The sequence spans 156 residues: ATP synthase subunit b (156 aa).

Residues 12 to 32 (VAFFIFVIFCMKFVWPPVIAA) traverse the membrane as a helical segment.

The protein belongs to the ATPase B chain family. In terms of assembly, F-type ATPases have 2 components, F(1) - the catalytic core - and F(0) - the membrane proton channel. F(1) has five subunits: alpha(3), beta(3), gamma(1), delta(1), epsilon(1). F(0) has three main subunits: a(1), b(2) and c(10-14). The alpha and beta chains form an alternating ring which encloses part of the gamma chain. F(1) is attached to F(0) by a central stalk formed by the gamma and epsilon chains, while a peripheral stalk is formed by the delta and b chains.

It localises to the cell inner membrane. F(1)F(0) ATP synthase produces ATP from ADP in the presence of a proton or sodium gradient. F-type ATPases consist of two structural domains, F(1) containing the extramembraneous catalytic core and F(0) containing the membrane proton channel, linked together by a central stalk and a peripheral stalk. During catalysis, ATP synthesis in the catalytic domain of F(1) is coupled via a rotary mechanism of the central stalk subunits to proton translocation. In terms of biological role, component of the F(0) channel, it forms part of the peripheral stalk, linking F(1) to F(0). This is ATP synthase subunit b from Pseudomonas savastanoi pv. phaseolicola (strain 1448A / Race 6) (Pseudomonas syringae pv. phaseolicola (strain 1448A / Race 6)).